Here is a 264-residue protein sequence, read N- to C-terminus: Thymidylate synthase (264 aa).

A dUMP-binding site is contributed by Arg-21. His-51 contacts (6R)-5,10-methylene-5,6,7,8-tetrahydrofolate. 126–127 (RR) provides a ligand contact to dUMP. Cys-146 functions as the Nucleophile in the catalytic mechanism. DUMP-binding positions include 166–169 (RSCD), Asn-177, and 207–209 (HLY). Asp-169 serves as a coordination point for (6R)-5,10-methylene-5,6,7,8-tetrahydrofolate. Ala-263 contacts (6R)-5,10-methylene-5,6,7,8-tetrahydrofolate.

Belongs to the thymidylate synthase family. Bacterial-type ThyA subfamily. As to quaternary structure, homodimer.

The protein localises to the cytoplasm. The catalysed reaction is dUMP + (6R)-5,10-methylene-5,6,7,8-tetrahydrofolate = 7,8-dihydrofolate + dTMP. The protein operates within pyrimidine metabolism; dTTP biosynthesis. In terms of biological role, catalyzes the reductive methylation of 2'-deoxyuridine-5'-monophosphate (dUMP) to 2'-deoxythymidine-5'-monophosphate (dTMP) while utilizing 5,10-methylenetetrahydrofolate (mTHF) as the methyl donor and reductant in the reaction, yielding dihydrofolate (DHF) as a by-product. This enzymatic reaction provides an intracellular de novo source of dTMP, an essential precursor for DNA biosynthesis. This is Thymidylate synthase from Edwardsiella ictaluri (strain 93-146).